A 521-amino-acid polypeptide reads, in one-letter code: Bifunctional purine biosynthesis protein PurH (521 aa).

Positions 1–145 (MIKQALISVS…KNHKDVIVIC (145 aa)) constitute an MGS-like domain.

Belongs to the PurH family.

It carries out the reaction (6R)-10-formyltetrahydrofolate + 5-amino-1-(5-phospho-beta-D-ribosyl)imidazole-4-carboxamide = 5-formamido-1-(5-phospho-D-ribosyl)imidazole-4-carboxamide + (6S)-5,6,7,8-tetrahydrofolate. It catalyses the reaction IMP + H2O = 5-formamido-1-(5-phospho-D-ribosyl)imidazole-4-carboxamide. Its pathway is purine metabolism; IMP biosynthesis via de novo pathway; 5-formamido-1-(5-phospho-D-ribosyl)imidazole-4-carboxamide from 5-amino-1-(5-phospho-D-ribosyl)imidazole-4-carboxamide (10-formyl THF route): step 1/1. It functions in the pathway purine metabolism; IMP biosynthesis via de novo pathway; IMP from 5-formamido-1-(5-phospho-D-ribosyl)imidazole-4-carboxamide: step 1/1. This is Bifunctional purine biosynthesis protein PurH from Janthinobacterium sp. (strain Marseille) (Minibacterium massiliensis).